Here is a 503-residue protein sequence, read N- to C-terminus: Na(+)-translocating NADH-quinone reductase subunit B (503 aa).

The next 5 membrane-spanning stretches (helical) occupy residues 55-75 (MMLV…NSGL), 94-114 (ISGF…VPIL), 120-140 (IFIP…VLFA), 161-181 (TLPP…GIVV), and 186-206 (FGGT…FLFF). FMN phosphoryl threonine is present on Thr248. 5 helical membrane passes run 361-381 (TSTF…IASW), 386-406 (AFGI…VLIV), 417-437 (FFIP…LVFM), 452-472 (WIYG…NPAY), and 475-495 (GVML…YFAV).

The protein belongs to the NqrB/RnfD family. As to quaternary structure, composed of six subunits; NqrA, NqrB, NqrC, NqrD, NqrE and NqrF. It depends on FMN as a cofactor.

Its subcellular location is the cell inner membrane. The catalysed reaction is a ubiquinone + n Na(+)(in) + NADH + H(+) = a ubiquinol + n Na(+)(out) + NAD(+). Its function is as follows. NQR complex catalyzes the reduction of ubiquinone-1 to ubiquinol by two successive reactions, coupled with the transport of Na(+) ions from the cytoplasm to the periplasm. NqrA to NqrE are probably involved in the second step, the conversion of ubisemiquinone to ubiquinol. The polypeptide is Na(+)-translocating NADH-quinone reductase subunit B (Chlamydia pneumoniae (Chlamydophila pneumoniae)).